Reading from the N-terminus, the 242-residue chain is uncharacterized protein (242 aa).

A signal peptide spans 1–20; that stretch reads MTFIKGLPLMLLTISLGCNA.

This sequence belongs to the periplasmic pilus chaperone family.

The protein localises to the periplasm. Could be required for the biogenesis of the putative YbgD fimbria. This is an uncharacterized protein from Escherichia coli (strain K12).